We begin with the raw amino-acid sequence, 1388 residues long: Retrotransposon Gag-like protein 9 (1388 aa).

Disordered regions lie at residues 491–511 (ATAS…GAMS), 769–790 (TPLM…ASSS), 895–918 (GGVS…RRPS), 1100–1138 (TDSG…PKEV), and 1336–1388 (AMGN…HTNK). Polar residues predominate over residues 1103–1123 (GEASTSHINITASGSKPTSHM). Residues 1359–1374 (YLKEHGDPQEGLHDHL) show a composition bias toward basic and acidic residues.

The polypeptide is Retrotransposon Gag-like protein 9 (Homo sapiens (Human)).